A 294-amino-acid chain; its full sequence is Homeobox-leucine zipper protein ATHB-16 (294 aa).

A compositionally biased stretch (polar residues) spans 1 to 20 (MKRLSSSDSMCGLISTSTDE). Residues 1 to 31 (MKRLSSSDSMCGLISTSTDEQSPRGYGSNYQ) form a disordered region. The segment at residues 56–115 (LSEKKRRLKVDQVKALEKNFELENKLEPERKTKLAQELGLQPRQVAVWFQNRRARWKTKQ) is a DNA-binding region (homeobox). The tract at residues 116–151 (LEKDYGVLKGQYDSLRHNFDSLRRDNDSLLQEISKI) is leucine-zipper. The span at 219 to 238 (SSDSCDSSAVLNDETSSDNG) shows a compositional bias: polar residues. The interval 219–241 (SSDSCDSSAVLNDETSSDNGRLT) is disordered.

It belongs to the HD-ZIP homeobox family. Class I subfamily. In terms of tissue distribution, widely expressed with a lower level in siliques.

The protein localises to the nucleus. Its function is as follows. Probable transcription factor that may function as a negative regulator of the flowering time response to photoperiod. May act to repress cell expansion during plant development. The sequence is that of Homeobox-leucine zipper protein ATHB-16 (ATHB-16) from Arabidopsis thaliana (Mouse-ear cress).